The sequence spans 648 residues: Biosynthetic arginine decarboxylase (648 aa).

At lysine 109 the chain carries N6-(pyridoxal phosphate)lysine. 291–301 (LDVGGGLGVDY) serves as a coordination point for substrate.

The protein belongs to the Orn/Lys/Arg decarboxylase class-II family. SpeA subfamily. The cofactor is Mg(2+). It depends on pyridoxal 5'-phosphate as a cofactor.

It catalyses the reaction L-arginine + H(+) = agmatine + CO2. Its function is as follows. Catalyzes the biosynthesis of agmatine from arginine. The polypeptide is Biosynthetic arginine decarboxylase (Prochlorococcus marinus (strain SARG / CCMP1375 / SS120)).